The following is a 219-amino-acid chain: Capsid protein (219 aa).

The segment at 5 to 29 (RRRRVVRRRKPVRRLRRRRRRFFKR) is nuclear localization signals.

It belongs to the circoviridae capsid protein family. As to quaternary structure, homomultimer. Assembles in the nucleus, presumably in an immature form, then migrates to the cytoplasm once assembled as mature virion. Interacts with Rep; this interaction relocates Rep into the nucleus.

The protein resides in the host nucleus. The protein localises to the virion. In terms of biological role, self-assembles to form the virion icosahedral capsid with a T=1 symmetry. This very small capsid (17-22 nm in diameter) allows the virus to be very stable in the environment and resistant to some disinfectants, including detergents. Essential for the initial attachment to heparan sulfate moieties and chondroitin sulfate B of the host cell surface proteoglycans. After attachment, the virus is endocytosed and traffics to the nucleus. The capsid protein binds and transports the viral genome and Rep across the nuclear envelope. The protein is Capsid protein (Cap) of Homo sapiens (Human).